Here is a 641-residue protein sequence, read N- to C-terminus: Protein zwilch (641 aa).

The residue at position 312 (S312) is a Phosphoserine.

Belongs to the ZWILCH family. In terms of assembly, component of the RZZ complex composed of rod, Zw10 and Zwilch.

It localises to the cytoplasm. Its subcellular location is the chromosome. The protein localises to the centromere. It is found in the kinetochore. The protein resides in the cytoskeleton. It localises to the spindle. Its function is as follows. Essential component of the mitotic checkpoint, which prevents cells from prematurely exiting mitosis. Required for the assembly of the dynein-dynactin, Mad2 complexes and spindly/CG15415 onto kinetochores. Its function related to the spindle assembly machinery is proposed to depend on its association in the RZZ complex. Failure to assemble the complex due to the absence of any one of its components, results in the incorrect redistribution of the remaining components to diverse membrane compartments. The sequence is that of Protein zwilch from Drosophila melanogaster (Fruit fly).